Here is a 499-residue protein sequence, read N- to C-terminus: Bifunctional NAD(P)H-hydrate repair enzyme Nnr (499 aa).

Residues Met-1–Pro-217 are NAD(P)H-hydrate epimerase. The region spanning Met-8 to Arg-213 is the YjeF N-terminal domain. Residues Gly-54–Asp-58 form an NADPHX 1; for epimerase activity region. The K(+) site is built by Asn-55 and Asp-124. The segment at Gly-128–Arg-134 is NADPHX 1; for epimerase activity. Residue Asp-160 participates in (6S)-NADPHX binding. Thr-163 serves as a coordination point for K(+). In terms of domain architecture, YjeF C-terminal spans Pro-217–Pro-485. Residues Pro-217–Asp-499 are ADP-dependent (S)-NAD(P)H-hydrate dehydratase. Gly-314 contributes to the (6S)-NADPHX binding site. The interval His-360–Arg-366 is NADPHX 2; for dehydratase activity. ADP is bound by residues Lys-397–Asp-401 and Thr-417–Gly-426. Residue Asp-427 participates in (6S)-NADPHX binding.

This sequence in the N-terminal section; belongs to the NnrE/AIBP family. In the C-terminal section; belongs to the NnrD/CARKD family. Requires K(+) as cofactor.

The enzyme catalyses (6S)-NADHX + ADP = AMP + phosphate + NADH + H(+). The catalysed reaction is (6S)-NADPHX + ADP = AMP + phosphate + NADPH + H(+). It catalyses the reaction (6R)-NADHX = (6S)-NADHX. It carries out the reaction (6R)-NADPHX = (6S)-NADPHX. Functionally, bifunctional enzyme that catalyzes the epimerization of the S- and R-forms of NAD(P)HX and the dehydration of the S-form of NAD(P)HX at the expense of ADP, which is converted to AMP. This allows the repair of both epimers of NAD(P)HX, a damaged form of NAD(P)H that is a result of enzymatic or heat-dependent hydration. The protein is Bifunctional NAD(P)H-hydrate repair enzyme Nnr (nnr) of Methanopyrus kandleri (strain AV19 / DSM 6324 / JCM 9639 / NBRC 100938).